Here is a 265-residue protein sequence, read N- to C-terminus: MADS-box protein JOINTLESS (265 aa).

The 55-residue stretch at 3-57 folds into the MADS-box domain; it reads REKIQIKKIDNSTARQVTFSKRRRGLFKKAEELSVLCDADVALIIFSSTGKLFDY. The K-box domain maps to 87 to 177; that stretch reads QLVENSNYSR…RQQVMEISNN (91 aa). The tract at residues 196–232 is disordered; that stretch reads ENGFNNNNNEDGQSSESVTNPCNSIDPPPQDDDSSDT. Polar residues predominate over residues 205-218; sequence EDGQSSESVTNPCN.

As to expression, widely expressed with highest levels in shoot tips and axillary buds. Also found in fully developed pedicels and flowers.

Its subcellular location is the nucleus. Functionally, putative transcription factor that coordinates gene expression underlying the differentiation of the pedicel abscission zone. May also be involved in the maintenance of the inflorescence meristem state. The sequence is that of MADS-box protein JOINTLESS (J) from Solanum lycopersicum (Tomato).